Consider the following 160-residue polypeptide: Na(+)/H(+) antiporter subunit E1 (160 aa).

4 consecutive transmembrane segments (helical) span residues 1 to 21, 27 to 47, 49 to 69, and 101 to 121; these read MAIQ…VTGS, FILG…VLPG, FYLI…IELI, and WQIV…VLGI.

It belongs to the CPA3 antiporters (TC 2.A.63) subunit E family. In terms of assembly, may form a heterooligomeric complex that consists of seven subunits: mnhA1, mnhB1, mnhC1, mnhD1, mnhE1, mnhF1 and mnhG1.

The protein resides in the cell membrane. In terms of biological role, mnh complex is a Na(+)/H(+) antiporter involved in Na(+) excretion. The polypeptide is Na(+)/H(+) antiporter subunit E1 (mnhE1) (Staphylococcus saprophyticus subsp. saprophyticus (strain ATCC 15305 / DSM 20229 / NCIMB 8711 / NCTC 7292 / S-41)).